Reading from the N-terminus, the 415-residue chain is Gamma-glutamyl phosphate reductase (415 aa).

The protein belongs to the gamma-glutamyl phosphate reductase family.

The protein localises to the cytoplasm. The enzyme catalyses L-glutamate 5-semialdehyde + phosphate + NADP(+) = L-glutamyl 5-phosphate + NADPH + H(+). Its pathway is amino-acid biosynthesis; L-proline biosynthesis; L-glutamate 5-semialdehyde from L-glutamate: step 2/2. In terms of biological role, catalyzes the NADPH-dependent reduction of L-glutamate 5-phosphate into L-glutamate 5-semialdehyde and phosphate. The product spontaneously undergoes cyclization to form 1-pyrroline-5-carboxylate. This Bacillus cereus (strain ATCC 10987 / NRS 248) protein is Gamma-glutamyl phosphate reductase.